The following is a 598-amino-acid chain: Protein unc-93 homolog B1 (598 aa).

Residues 1-36 are disordered; the sequence is MEVEPPLYPVAGAAGPQGDEDRHGVPDGPEAPLDEL. The next 5 helical transmembrane spans lie at 64–84, 110–130, 132–152, 160–180, and 223–243; these read VLAA…LLQM, KMLM…PVLI, FFGT…FVST, TLVP…ASMG, and IFYS…IYFL. 2 N-linked (GlcNAc...) asparagine glycosylation sites follow: N251 and N272. Transmembrane regions (helical) follow at residues 285 to 305, 343 to 363, 378 to 398, 403 to 423, and 428 to 448; these read LIVV…MVLG, LVPF…GFAL, LLIA…LGLW, VPLV…FFWA, and VLQH…GSAL. An N-linked (GlcNAc...) asparagine glycan is attached at N449. The next 2 helical transmembrane spans lie at 469–489 and 495–515; these read FIFT…YLGS and AKLA…LWME. The interval 524–598 is disordered; that stretch reads PRQPRIPKPQ…ALGGDGPEEQ (75 aa). Over residues 544–554 the composition is skewed to acidic residues; the sequence is EDNSDESDMEG. 2 positions are modified to phosphoserine: S547 and S550.

It belongs to the unc-93 family. In terms of assembly, interacts with TLR3, TLR5, TLR7, TLR8, TLR9 and TLR13 (probably via transmembrane domain). Post-translationally, N-glycosylated.

The protein localises to the endoplasmic reticulum membrane. The protein resides in the endosome. It is found in the lysosome. Its subcellular location is the cytoplasmic vesicle. It localises to the phagosome. Functionally, plays an important role in innate and adaptive immunity by regulating nucleotide-sensing Toll-like receptor (TLR) signaling. Required for the transport of a subset of TLRs (including TLR3, TLR7 and TLR9) from the endoplasmic reticulum to endolysosomes where they can engage pathogen nucleotides and activate signaling cascades. May play a role in autoreactive B-cells removal. In Mus musculus (Mouse), this protein is Protein unc-93 homolog B1.